The following is a 339-amino-acid chain: uncharacterized protein (339 aa).

The ABC transporter domain maps to 13 to 243; the sequence is LSLNKLDVGF…PATPFICEFI (231 aa). 45 to 52 provides a ligand contact to ATP; that stretch reads GPSGSGKS.

It belongs to the ABC transporter superfamily.

The protein resides in the cell inner membrane. Its function is as follows. Probably part of a binding-protein-dependent transport system y4fNOP. Probably responsible for energy coupling to the transport system. This is an uncharacterized protein from Sinorhizobium fredii (strain NBRC 101917 / NGR234).